Here is a 391-residue protein sequence, read N- to C-terminus: Secreted aspartic protease 1 (391 aa).

The first 18 residues, 1-18, serve as a signal peptide directing secretion; the sequence is MFLKNIFIALAIALLVDA. Residues 19 to 50 constitute a propeptide, activation peptide; that stretch reads SPAKRSPGFVTLDFDVIKTPVNATGQEGKVKR. A glycan (N-linked (GlcNAc...) asparagine) is linked at Asn-40. The 314-residue stretch at 64-377 folds into the Peptidase A1 domain; the sequence is YAADITIGSN…DLDDDKISLA (314 aa). Residue Asp-82 is part of the active site. A pepstatin A-binding site is contributed by 82 to 84; that stretch reads DTG. A disulfide bond links Cys-97 and Cys-109. Zn(2+) is bound by residues Asp-241 and Asp-263. The active site involves Asp-267. 267 to 271 contributes to the pepstatin A binding site; that stretch reads DSGTT. An intrachain disulfide couples Cys-305 to Cys-343.

Belongs to the peptidase A1 family. In terms of assembly, monomer.

It is found in the secreted. The catalysed reaction is Preferential cleavage at the carboxyl of hydrophobic amino acids, but fails to cleave 15-Leu-|-Tyr-16, 16-Tyr-|-Leu-17 and 24-Phe-|-Phe-25 of insulin B chain. Activates trypsinogen, and degrades keratin.. With respect to regulation, inhibited by pepstatin A analogs and squash aspartic peptidase inhibitor (SQAPI). Secreted aspartic peptidases (SAPs) are a group of ten acidic hydrolases considered as key virulence factors. These enzymes supply the fungus with nutrient amino acids as well as are able to degrade the selected host's proteins involved in the immune defense. Induces host inflammatory cytokine production in a proteolytic activity-independent way. Plays a role in tissue damage during superficial infection. Moreover, acts toward human hemoglobin though limited proteolysis to generate a variety of antimicrobial hemocidins, enabling to compete with the other microorganisms of the same physiological niche using the microbicidal peptides generated from the host protein. In terms of biological role, plays a key role in defense against host by cleaving histatin-5 (Hst 5), a peptide from human saliva that carries out fungicidal activity. The cleavage rate decreases in an order of SAP2 &gt; SAP9 &gt; SAP3 &gt; SAP7 &gt; SAP4 &gt; SAP1 &gt; SAP8. The first cleavage occurs between residues 'Lys-17' and 'His-18' of Hst 5, giving DSHAKRHHGYKRKFHEK and HHSHRGY peptides. Further fragmentation by SAP1 results in AKRHHGYKRKFHEK and AKRHHGY products. The protein is Secreted aspartic protease 1 of Candida albicans (Yeast).